Reading from the N-terminus, the 115-residue chain is Virulence-associated protein A' (115 aa).

The HTH cro/C1-type domain occupies 16–70 (IKSDLDGLGINITEAAKALDVTRAALSEIINGKRGISAKMAWKLSKAFTNSDPEF). The H-T-H motif DNA-binding region spans 27–46 (ITEAAKALDVTRAALSEIIN).

The protein belongs to the VapA/VapI family.

The chain is Virulence-associated protein A' (vapA') from Dichelobacter nodosus (Bacteroides nodosus).